A 618-amino-acid polypeptide reads, in one-letter code: DELLA protein SLN1 (618 aa).

The tract at residues 1–36 (MKREYQDGGGSGGGGDEMGSSRDKMMVSSSEAGEGE) is disordered. The span at 7-17 (DGGGSGGGGDE) shows a compositional bias: gly residues. The DELLA motif motif lies at 39–43 (DELLA). 2 disordered regions span residues 106-137 (LNAP…YFDL) and 159-197 (APAD…GAAR). Residues 108–118 (APPPPLPPAPP) show a composition bias toward pro residues. Composition is skewed to low complexity over residues 119–128 (QLNASTSSTV) and 176–197 (TGGS…GAAR). The GRAS domain maps to 221-614 (VDTQEAGIRL…RPLIATSAWR (394 aa)). The leucine repeat I (LRI) stretch occupies residues 228 to 284 (IRLVHALLACAEAVQQENLSAAEALVKQIPLLAASQGGAMRKVAAYFGEALARRVFR). The short motif at 235-239 (LACAE) is the LxCxE motif element. Residues 303–368 (HAHFYESCPY…GGPPSFRLTG (66 aa)) form a VHIID region. Positions 334–338 (VHVVD) match the VHIID motif. The segment at 382-421 (QVGWKLAQFAHTIRVDFQYRGLVAATLADLEPFMLQPEGE) is leucine repeat II (LRII). Residues 431–535 (IAVNSVFEMH…EVYLGRQICN (105 aa)) form a PFYRE region. The SAW stretch occupies residues 538–614 (ACEGTERTER…RPLIATSAWR (77 aa)).

Belongs to the GRAS family. DELLA subfamily. Phosphorylated. In terms of processing, ubiquitinated. Upon GA application it is ubiquitinated, leading to its subsequent degradation. As to expression, apparently restricted to regions where growth is occurring in the leaf blade. Localizes almost exclusively to the basal elongation zone (EZ) for the elongating blades of L1, L2 and L3. More detailed fractionation of the L3 blade shows that in cv. Himalaya, it is preferentially localized to the basal third of the EZ, but its presence can still be detected toward the end of the EZ (at protein level).

It localises to the nucleus. Functionally, probable transcriptional regulator that acts as a repressor of the gibberellin (GA) signaling pathway. Probably acts by participating in large multiprotein complexes that repress transcription of GA-inducible genes. Upon GA application, it is degraded by the proteasome, allowing the GA signaling pathway. Acts as a negative regulator of GAMYB gene expression. This chain is DELLA protein SLN1 (SLN1), found in Hordeum vulgare (Barley).